Reading from the N-terminus, the 817-residue chain is Probable beta-glucosidase G (817 aa).

An N-terminal signal peptide occupies residues 1–20 (MASIAHLIFSGLLAATVANS). N-linked (GlcNAc...) asparagine glycosylation is found at asparagine 40, asparagine 58, asparagine 229, and asparagine 276. The active site involves aspartate 304. Asparagine 343, asparagine 350, asparagine 402, asparagine 507, asparagine 563, asparagine 584, asparagine 623, asparagine 662, asparagine 679, and asparagine 715 each carry an N-linked (GlcNAc...) asparagine glycan.

This sequence belongs to the glycosyl hydrolase 3 family.

It is found in the secreted. The catalysed reaction is Hydrolysis of terminal, non-reducing beta-D-glucosyl residues with release of beta-D-glucose.. It participates in glycan metabolism; cellulose degradation. Functionally, beta-glucosidases are one of a number of cellulolytic enzymes involved in the degradation of cellulosic biomass. Catalyzes the last step releasing glucose from the inhibitory cellobiose. This Neosartorya fischeri (strain ATCC 1020 / DSM 3700 / CBS 544.65 / FGSC A1164 / JCM 1740 / NRRL 181 / WB 181) (Aspergillus fischerianus) protein is Probable beta-glucosidase G (bglG).